Reading from the N-terminus, the 89-residue chain is Small ribosomal subunit protein uS14A (89 aa).

The protein belongs to the universal ribosomal protein uS14 family. As to quaternary structure, part of the 30S ribosomal subunit. Contacts proteins S3 and S10.

Its function is as follows. Binds 16S rRNA, required for the assembly of 30S particles and may also be responsible for determining the conformation of the 16S rRNA at the A site. The sequence is that of Small ribosomal subunit protein uS14A from Lactococcus lactis subsp. lactis (strain IL1403) (Streptococcus lactis).